The chain runs to 227 residues: MNQDQLKQLVGQKAVEYIQDGMQVGLGTGSTVKFMVDALGERVKNEHLNIVGVSTSDRTAAQAKALGIPMKSVDEVDHLDLTIDGADEIADDFQGVKGGGAALLFEKIVAINSDKVMWIVDESKMVHQLGAFGLPVEVIPYGSQHVFEKMAARGYNPVFRKVNDELVRTDSNNIIIDLHIDPITDPHALAEDLIHMVGVVEHGLFLDMVNTVIVGHANGPEVIEARP.

Substrate contacts are provided by residues threonine 28–threonine 31, aspartate 84–aspartate 87, and lysine 97–glycine 100. Glutamate 106 (proton acceptor) is an active-site residue. Lysine 124 contacts substrate.

Belongs to the ribose 5-phosphate isomerase family. As to quaternary structure, homodimer.

The enzyme catalyses aldehydo-D-ribose 5-phosphate = D-ribulose 5-phosphate. Its pathway is carbohydrate degradation; pentose phosphate pathway; D-ribose 5-phosphate from D-ribulose 5-phosphate (non-oxidative stage): step 1/1. Functionally, catalyzes the reversible conversion of ribose-5-phosphate to ribulose 5-phosphate. The polypeptide is Ribose-5-phosphate isomerase A (Lactiplantibacillus plantarum (strain ATCC BAA-793 / NCIMB 8826 / WCFS1) (Lactobacillus plantarum)).